The primary structure comprises 339 residues: Glucokinase (339 aa).

Residue 16–21 (GDIGGT) coordinates ATP.

Belongs to the bacterial glucokinase family.

Its subcellular location is the cytoplasm. It carries out the reaction D-glucose + ATP = D-glucose 6-phosphate + ADP + H(+). The chain is Glucokinase from Sinorhizobium medicae (strain WSM419) (Ensifer medicae).